Consider the following 599-residue polypeptide: Riboflavin biosynthesis protein PYRR, chloroplastic (599 aa).

The transit peptide at 1-17 (MALSFRISSSSPLICRA) directs the protein to the chloroplast. The region spanning 30 to 152 (TTDAAFIRRA…ELRSHGIEVN (123 aa)) is the CMP/dCMP-type deaminase domain.

This sequence in the C-terminal section; belongs to the YbiA family.

The protein resides in the plastid. The protein localises to the chloroplast. It carries out the reaction 5-amino-6-(5-phospho-D-ribitylamino)uracil + NADP(+) = 5-amino-6-(5-phospho-D-ribosylamino)uracil + NADPH + H(+). The enzyme catalyses 2,5-diamino-6-hydroxy-4-(5-phosphoribosylamino)-pyrimidine + H2O = 2,5,6-triamino-4-hydroxypyrimidine + D-ribose 5-phosphate. It catalyses the reaction 5-amino-6-(5-phospho-D-ribosylamino)uracil + H2O = 5,6-diaminouracil + D-ribose 5-phosphate. It participates in cofactor biosynthesis; riboflavin biosynthesis; 5-amino-6-(D-ribitylamino)uracil from GTP: step 3/4. Pyrimidine reductase involved in the riboflavin biosynthesis pathway. Also has a non-functional N-terminal deaminase domain that lacks the catalytically essential zinc-binding residues. Functionally, catalyzes the hydrolysis of the N-glycosidic bond in the first two intermediates of riboflavin biosynthesis, which are highly reactive metabolites, yielding relatively innocuous products. Thus, can divert a surplus of harmful intermediates into relatively harmless products and pre-empt the damage these intermediates would otherwise do. Helps maintain flavin levels. Has no activity against GTP, nucleoside monophosphates or ADP-ribose. The protein is Riboflavin biosynthesis protein PYRR, chloroplastic (PYRR) of Arabidopsis thaliana (Mouse-ear cress).